The primary structure comprises 308 residues: Mu-like prophage FluMu major head subunit (308 aa).

To phage Mu protein T.

The protein is Mu-like prophage FluMu major head subunit of Haemophilus influenzae (strain ATCC 51907 / DSM 11121 / KW20 / Rd).